The primary structure comprises 608 residues: Zinc metalloproteinase-disintegrin-like agkihagin (608 aa).

Residues 1 to 20 form the signal peptide; it reads MIQVLLVTICLAAFPYQGSS. A propeptide spanning residues 21-189 is cleaved from the precursor; sequence IILESGNVND…KKASQSNLTP (169 aa). A Peptidase M12B domain is found at 199–395; that stretch reads KFVKLFLVAD…NMPQCILKKP (197 aa). 3 cysteine pairs are disulfide-bonded: C310/C390, C350/C374, and C352/C357. Residue H335 participates in Zn(2+) binding. E336 is a catalytic residue. Zn(2+)-binding residues include H339 and H345. The 86-residue stretch at 403–488 folds into the Disintegrin domain; that stretch reads PPVCGNYFVE…ADCTDRFQKN (86 aa). Ca(2+) is bound by residues V405, N408, F410, E412, E415, and D418. 14 cysteine pairs are disulfide-bonded: C406/C435, C417/C430, C419/C425, C429/C452, C443/C449, C448/C474, C461/C481, C468/C499, C492/C504, C511/C561, C526/C570, C539/C549, C556/C596, and C590/C601. Residues 467–469 carry the D/ECD-tripeptide motif; that stretch reads ECD. Residues D469, M470, D472, D483, and R484 each contribute to the Ca(2+) site. N-linked (GlcNAc...) asparagine glycosylation occurs at N501.

It belongs to the venom metalloproteinase (M12B) family. P-III subfamily. P-IIIc sub-subfamily. In terms of assembly, homodimer; disulfide-linked. Requires Zn(2+) as cofactor. Expressed by the venom gland.

It is found in the secreted. Inhibited by EDTA and EGTA. Not inhibited by PMSF, antipain, pepstatin, and iodoacetamide. In terms of biological role, strongly inhibits the collagen-induced human platelet aggregation. Hydrolyzes the Aalpha-chain of fibrinogen (FGA), without cleavage of Bbeta- and gamma-chains. Induces apoptosis and strongly inhibits proliferation of endothelial cells as well as adhesion of the cells to extracellular matrix proteins. The sequence is that of Zinc metalloproteinase-disintegrin-like agkihagin from Deinagkistrodon acutus (Hundred-pace snake).